A 247-amino-acid chain; its full sequence is Aliphatic sulfonates import ATP-binding protein SsuB 2 (247 aa).

Residues 28-242 (VSVRGLQRRY…ALRPILLEEL (215 aa)) form the ABC transporter domain. Residue 60–67 (GESGCGKT) coordinates ATP.

It belongs to the ABC transporter superfamily. Aliphatic sulfonates importer (TC 3.A.1.17.2) family. The complex is composed of two ATP-binding proteins (SsuB), two transmembrane proteins (SsuC) and a solute-binding protein (SsuA).

It is found in the cell inner membrane. It carries out the reaction ATP + H2O + aliphatic sulfonate-[sulfonate-binding protein]Side 1 = ADP + phosphate + aliphatic sulfonateSide 2 + [sulfonate-binding protein]Side 1.. Its function is as follows. Part of the ABC transporter complex SsuABC involved in aliphatic sulfonates import. Responsible for energy coupling to the transport system. This chain is Aliphatic sulfonates import ATP-binding protein SsuB 2, found in Paraburkholderia xenovorans (strain LB400).